The chain runs to 698 residues: Pheromone-regulated protein PRM7 (698 aa).

Disordered stretches follow at residues 1 to 65 (MYRT…IGNS), 133 to 183 (ESTT…SAVT), 197 to 274 (SVDQ…TVTI), and 455 to 480 (SASS…DSKT). Low complexity-rich tracts occupy residues 9–56 (EVTT…TTSA) and 158–183 (VTTS…SAVT). Low complexity predominate over residues 455–465 (SASSSRSSATS).

The sequence is that of Pheromone-regulated protein PRM7 (PRM7) from Saccharomyces cerevisiae (strain ATCC 204508 / S288c) (Baker's yeast).